The following is a 795-amino-acid chain: Phenylalanine--tRNA ligase beta subunit (795 aa).

The 110-residue stretch at 39–148 (AGDFSGVVVG…QNAPVGTNLR (110 aa)) folds into the tRNA-binding domain. The B5 domain occupies 401 to 476 (PKLNQVSLRR…RIYGYNSIPN (76 aa)). Residues Asp-454, Asp-460, Glu-463, and Glu-464 each coordinate Mg(2+). In terms of domain architecture, FDX-ACB spans 701-794 (SRFPANRRDL…LKQRFNAYLR (94 aa)).

The protein belongs to the phenylalanyl-tRNA synthetase beta subunit family. Type 1 subfamily. As to quaternary structure, tetramer of two alpha and two beta subunits. Requires Mg(2+) as cofactor.

It localises to the cytoplasm. It catalyses the reaction tRNA(Phe) + L-phenylalanine + ATP = L-phenylalanyl-tRNA(Phe) + AMP + diphosphate + H(+). This Pasteurella multocida (strain Pm70) protein is Phenylalanine--tRNA ligase beta subunit (pheT).